The primary structure comprises 144 residues: Ribosome-binding factor A (144 aa).

Positions 121–144 (KAQTGVEEPLENTAEGEENPSGGE) are disordered. Residues 128-138 (EPLENTAEGEE) show a composition bias toward acidic residues.

This sequence belongs to the RbfA family. As to quaternary structure, monomer. Binds 30S ribosomal subunits, but not 50S ribosomal subunits or 70S ribosomes.

It is found in the cytoplasm. One of several proteins that assist in the late maturation steps of the functional core of the 30S ribosomal subunit. Associates with free 30S ribosomal subunits (but not with 30S subunits that are part of 70S ribosomes or polysomes). Required for efficient processing of 16S rRNA. May interact with the 5'-terminal helix region of 16S rRNA. The protein is Ribosome-binding factor A of Synechococcus sp. (strain JA-2-3B'a(2-13)) (Cyanobacteria bacterium Yellowstone B-Prime).